The chain runs to 133 residues: uncharacterized protein (133 aa).

A disordered region spans residues 82–133 (KIKSYSPSRSQKALNNPSKIRTKQTNNDTTIQQSNNTTSTNTKPSSNTNTQQ). The span at 86 to 100 (YSPSRSQKALNNPSK) shows a compositional bias: polar residues. Positions 105 to 133 (QTNNDTTIQQSNNTTSTNTKPSSNTNTQQ) are enriched in low complexity.

This is an uncharacterized protein from Acidianus convivator (ABV).